The sequence spans 114 residues: Putative antiporter subunit mnhC2 (114 aa).

3 helical membrane-spanning segments follow: residues 3 to 23, 28 to 48, and 72 to 92; these read LILLLVIGFLVFIGTYMILSI, IVIGISIYTHAGNLIIMSMGT, and AIVLTAIVIGFGMTAFLLVLV.

The protein belongs to the CPA3 antiporters (TC 2.A.63) subunit C family. As to quaternary structure, may form a heterooligomeric complex that consists of seven subunits: mnhA2, mnhB2, mnhC2, mnhD2, mnhE2, mnhF2 and mnhG2.

The protein resides in the cell membrane. The polypeptide is Putative antiporter subunit mnhC2 (mnhC2) (Staphylococcus aureus (strain MRSA252)).